The chain runs to 174 residues: Large ribosomal subunit protein uL10 (174 aa).

This sequence belongs to the universal ribosomal protein uL10 family. As to quaternary structure, part of the ribosomal stalk of the 50S ribosomal subunit. The N-terminus interacts with L11 and the large rRNA to form the base of the stalk. The C-terminus forms an elongated spine to which L12 dimers bind in a sequential fashion forming a multimeric L10(L12)X complex.

Forms part of the ribosomal stalk, playing a central role in the interaction of the ribosome with GTP-bound translation factors. The protein is Large ribosomal subunit protein uL10 of Desulfovibrio desulfuricans (strain ATCC 27774 / DSM 6949 / MB).